Consider the following 179-residue polypeptide: Enhancer of split m8 protein (179 aa).

Residues 10–65 form the bHLH domain; that stretch reads YQKVKKPMLERQRRARMNKCLDNLKTLVAELRGDDGILRMDKAEMLESAVIFMRQQ. One can recognise an Orange domain in the interval 83–116; the sequence is FKNGYMNAVNEVSRVMASTPGMSVDLGKSVMTHL. Residues 146 to 179 form a disordered region; that stretch reads DKAPLSPASSGYHSDCDSPAPSPQPMQQPLWRPW. The WRPW motif signature appears at 176 to 179; the sequence is WRPW.

In terms of assembly, homodimer. Heterodimers with dpn. Transcription repression requires formation of a complex with a corepressor protein (Groucho).

It localises to the nucleus. Participates in the control of cell fate choice by uncommitted neuroectodermal cells in the embryo. Transcriptional repressor. Binds DNA on N-box motifs: 5'-CACNAG-3'. Part of the Notch signaling pathway. This Drosophila melanogaster (Fruit fly) protein is Enhancer of split m8 protein.